The chain runs to 314 residues: Olfactory receptor 1E2 (314 aa).

Residues 1-25 lie on the Extracellular side of the membrane; it reads MMGQNQTSISDFLLLGLPIQPEQQN. Residue Asn-5 is glycosylated (N-linked (GlcNAc...) asparagine). Residues 26-49 traverse the membrane as a helical segment; that stretch reads LCYALFLAMYLTTLLGNLLIIVLI. The Cytoplasmic segment spans residues 50 to 57; the sequence is RLDSHLHT. Residues 58–79 traverse the membrane as a helical segment; that stretch reads PMYLFLSNLSFSDLCFSSVTIP. The Extracellular segment spans residues 80–100; it reads KLLQNMQNQDPSIPYADCLTQ. A disulfide bridge links Cys-97 with Cys-189. Residues 101–120 traverse the membrane as a helical segment; that stretch reads MYFFLLFGDLESFLLVAMAY. Over 121 to 139 the chain is Cytoplasmic; that stretch reads DRYVAICFPLHYTAIMSPM. Residues 140-158 traverse the membrane as a helical segment; that stretch reads LCLSLVALSWVLTTFHAML. Over 159 to 195 the chain is Extracellular; it reads HTLLMARLCFCADNVIPHFFCDMSALLKLACSDTRVN. A helical membrane pass occupies residues 196–219; the sequence is EWVIFIMGGLIVVIPFLLILGSYA. Topologically, residues 220-236 are cytoplasmic; the sequence is RIVSSILKVPSSKGICK. Residues 237 to 259 traverse the membrane as a helical segment; it reads AFSTCGSHLSVVSLFYGTIIGLY. The Extracellular portion of the chain corresponds to 260–272; sequence LCPSANSSTLKET. Asn-265 carries an N-linked (GlcNAc...) asparagine glycan. Residues 273 to 292 form a helical membrane-spanning segment; it reads VMAMMYTVVTPMLNPFIYSL. Residues 293–314 lie on the Cytoplasmic side of the membrane; it reads RNRDMKGALERVICKRKNPFLL.

This sequence belongs to the G-protein coupled receptor 1 family.

It is found in the cell membrane. In terms of biological role, odorant receptor. The sequence is that of Olfactory receptor 1E2 (OR1E2) from Gorilla gorilla gorilla (Western lowland gorilla).